The following is an 842-amino-acid chain: Glucans biosynthesis glucosyltransferase H (842 aa).

7 helical membrane-spanning segments follow: residues 140-160 (ILLL…KTIL), 194-214 (ILIL…TALM), 513-533 (VFLT…FLAL), 570-590 (LFAS…MLIW), 615-635 (VLLA…AFLG), 656-676 (FMRH…MAWL), and 680-700 (FLFW…VSVV).

Belongs to the glycosyltransferase 2 family. OpgH subfamily.

It is found in the cell inner membrane. It functions in the pathway glycan metabolism; osmoregulated periplasmic glucan (OPG) biosynthesis. In terms of biological role, involved in the biosynthesis of osmoregulated periplasmic glucans (OPGs). This chain is Glucans biosynthesis glucosyltransferase H, found in Citrobacter koseri (strain ATCC BAA-895 / CDC 4225-83 / SGSC4696).